The sequence spans 200 residues: NAD(P)H dehydrogenase (quinone) (200 aa).

The region spanning 4 to 191 (VLVLYYSSYG…DIARYQGKHV (188 aa)) is the Flavodoxin-like domain. Residues 10-15 (SSYGHV) and 79-81 (TRF) contribute to the FMN site. Tyrosine 12 contacts NAD(+). Tryptophan 99 contacts substrate. FMN is bound by residues 114–120 (STGTQHG) and histidine 135.

It belongs to the WrbA family. The cofactor is FMN.

The catalysed reaction is a quinone + NADH + H(+) = a quinol + NAD(+). The enzyme catalyses a quinone + NADPH + H(+) = a quinol + NADP(+). This Burkholderia cenocepacia (strain HI2424) protein is NAD(P)H dehydrogenase (quinone).